The primary structure comprises 250 residues: Probable transcriptional regulatory protein SAV_6832 (250 aa).

The protein belongs to the TACO1 family.

It is found in the cytoplasm. This is Probable transcriptional regulatory protein SAV_6832 from Streptomyces avermitilis (strain ATCC 31267 / DSM 46492 / JCM 5070 / NBRC 14893 / NCIMB 12804 / NRRL 8165 / MA-4680).